An 80-amino-acid polypeptide reads, in one-letter code: Exodeoxyribonuclease 7 small subunit (80 aa).

This sequence belongs to the XseB family. As to quaternary structure, heterooligomer composed of large and small subunits.

It localises to the cytoplasm. The enzyme catalyses Exonucleolytic cleavage in either 5'- to 3'- or 3'- to 5'-direction to yield nucleoside 5'-phosphates.. Functionally, bidirectionally degrades single-stranded DNA into large acid-insoluble oligonucleotides, which are then degraded further into small acid-soluble oligonucleotides. This chain is Exodeoxyribonuclease 7 small subunit, found in Rickettsia akari (strain Hartford).